The primary structure comprises 581 residues: NADH-quinone oxidoreductase subunit C/D (581 aa).

The segment at 1–172 (MSGTDLVSEL…PLFNMTAALF (172 aa)) is NADH dehydrogenase I subunit C. The tract at residues 196–581 (ELMILNYGPH…IDYVMSDVDR (386 aa)) is NADH dehydrogenase I subunit D.

This sequence in the N-terminal section; belongs to the complex I 30 kDa subunit family. It in the C-terminal section; belongs to the complex I 49 kDa subunit family. NDH-1 is composed of 13 different subunits. Subunits NuoB, CD, E, F, and G constitute the peripheral sector of the complex.

The protein resides in the cell inner membrane. It carries out the reaction a quinone + NADH + 5 H(+)(in) = a quinol + NAD(+) + 4 H(+)(out). NDH-1 shuttles electrons from NADH, via FMN and iron-sulfur (Fe-S) centers, to quinones in the respiratory chain. The immediate electron acceptor for the enzyme in this species is believed to be ubiquinone. Couples the redox reaction to proton translocation (for every two electrons transferred, four hydrogen ions are translocated across the cytoplasmic membrane), and thus conserves the redox energy in a proton gradient. The protein is NADH-quinone oxidoreductase subunit C/D of Rhodopseudomonas palustris (strain BisB5).